A 94-amino-acid chain; its full sequence is Integration host factor subunit beta (94 aa).

It belongs to the bacterial histone-like protein family. Heterodimer of an alpha and a beta chain.

This protein is one of the two subunits of integration host factor, a specific DNA-binding protein that functions in genetic recombination as well as in transcriptional and translational control. This is Integration host factor subunit beta (ihfB) from Pasteurella multocida (strain Pm70).